Reading from the N-terminus, the 189-residue chain is WASH complex subunit homolog 3 (189 aa).

Residues 35 to 74 (MTEMLNNFGNKMEDILEKAEQSLDTADRKLRLMESKLAGM) are a coiled coil. Disordered regions lie at residues 76–101 (LEDK…NPSS) and 150–189 (SEGV…SDSD). Over residues 150 to 165 (SEGVDPSILKRGDEPS) the composition is skewed to basic and acidic residues. Positions 167–189 (PQAQTSRNYESSGESTASFSDSD) are enriched in polar residues. Threonine 182 is modified (phosphothreonine).

Belongs to the CCDC53 family. In terms of assembly, probable component of the WASH complex. Component of the DHIC (ddl-1-containing hsf-1 inhibitory complex), which contains at least ddl-1, ddl-2, hsb-1 and hsf-1. Within the complex, interacts with ddl-2. Within the complex, interacts with hsb-1. Within the complex, interacts with hsf-1. Formation of the DHIC may be dependent upon the Insulin/IGF-1-like signaling (IIS) mediated pathway. Post-translationally, phosphorylated. Phosphorylation on Thr-182 may promote DHIC complex dissociation and consequently the activation of heat-shock transcription factor hsf-1. Phosphorylation is modulated by the Insulin/IGF-1-like signaling (IIS) mediated pathway. Expressed in pharynx, intestine, body wall muscles, vulva muscles, spermatheca, and several head and tail neurons.

Acts as a component of the WASH core complex that functions as a nucleation-promoting factor (NPF) at the surface of endosomes, where it recruits and activates the Arp2/3 complex to induce actin polymerization, playing a key role in the fission of tubules that serve as transport intermediates during endosome sorting. Acts as a component of the DHIC (ddl-1-containing hsf-1 inhibitory complex) which modulates lifespan by sequestering the heat-shock transcription factor hsf-1 to negatively regulate its binding to DNA and its transcriptional activity. This is WASH complex subunit homolog 3 (ddl-1) from Caenorhabditis elegans.